Reading from the N-terminus, the 359-residue chain is Agropine synthesis conjugase (359 aa).

Positions 28–171 constitute an SIS domain; sequence TVAKFGRATA…IGGILNEREN (144 aa).

The polypeptide is Agropine synthesis conjugase (mas2) (Rhizobium rhizogenes (Agrobacterium rhizogenes)).